The sequence spans 110 residues: RNA polymerase II transcriptional coactivator (110 aa).

Residues 1 to 50 (MPKTKKKDSSSDSDSGPDDRIKPASKKAKESDAPNSDPKDSGENGATSWT) form a disordered region. A compositionally biased stretch (basic and acidic residues) spans 17–42 (PDDRIKPASKKAKESDAPNSDPKDSG).

The protein belongs to the transcriptional coactivator PC4 family.

Its subcellular location is the nucleus. In terms of biological role, general coactivator that functions cooperatively with TAFs and mediates functional interactions between upstream activators and the general transcriptional machinery. Binds single-stranded DNA. Binds specifically to the NssBF element, a short nucleotide sequence of the 1731 retrotransposon, to repress promoter activity. This Drosophila melanogaster (Fruit fly) protein is RNA polymerase II transcriptional coactivator (Ssb-c31a).